The sequence spans 313 residues: Homoserine O-succinyltransferase (313 aa).

Cys-142 serves as the catalytic Acyl-thioester intermediate. Substrate contacts are provided by Lys-163 and Ser-192. His-235 acts as the Proton acceptor in catalysis. Glu-237 is a catalytic residue. A substrate-binding site is contributed by Arg-249.

Belongs to the MetA family.

It is found in the cytoplasm. The enzyme catalyses L-homoserine + succinyl-CoA = O-succinyl-L-homoserine + CoA. It functions in the pathway amino-acid biosynthesis; L-methionine biosynthesis via de novo pathway; O-succinyl-L-homoserine from L-homoserine: step 1/1. Its function is as follows. Transfers a succinyl group from succinyl-CoA to L-homoserine, forming succinyl-L-homoserine. The chain is Homoserine O-succinyltransferase from Vibrio parahaemolyticus serotype O3:K6 (strain RIMD 2210633).